The sequence spans 82 residues: Immediate early response 3-interacting protein 1 (82 aa).

2 consecutive transmembrane segments (helical) span residues 2–22 and 62–82; these read AFTL…VAVL and VMRV…LLFG.

It belongs to the YOS1 family.

The protein resides in the endoplasmic reticulum membrane. Its function is as follows. Regulator of endoplasmic reticulum secretion that acts as a key determinant of brain size. Required for secretion of extracellular matrix proteins. Required for correct brain development by depositing sufficient extracellular matrix proteins for tissue integrity and the proliferation of neural progenitors. Acts as a regulator of the unfolded protein response (UPR). In Xenopus laevis (African clawed frog), this protein is Immediate early response 3-interacting protein 1.